The following is a 984-amino-acid chain: Valine--tRNA ligase (984 aa).

The short motif at 65 to 75 (PNVTGSLHMGH) is the 'HIGH' region element. The 'KMSKS' region signature appears at 579 to 583 (KMSKS). Lys-582 lines the ATP pocket. The stretch at 954 to 984 (VEVVDAEKAKLAELEGQLTAMTAQMEELKNL) forms a coiled coil.

This sequence belongs to the class-I aminoacyl-tRNA synthetase family. ValS type 1 subfamily. In terms of assembly, monomer.

Its subcellular location is the cytoplasm. The catalysed reaction is tRNA(Val) + L-valine + ATP = L-valyl-tRNA(Val) + AMP + diphosphate. Its function is as follows. Catalyzes the attachment of valine to tRNA(Val). As ValRS can inadvertently accommodate and process structurally similar amino acids such as threonine, to avoid such errors, it has a 'posttransfer' editing activity that hydrolyzes mischarged Thr-tRNA(Val) in a tRNA-dependent manner. The sequence is that of Valine--tRNA ligase from Psychrobacter arcticus (strain DSM 17307 / VKM B-2377 / 273-4).